We begin with the raw amino-acid sequence, 296 residues long: 4-diphosphocytidyl-2-C-methyl-D-erythritol kinase (296 aa).

The active site involves K11. 95 to 105 (PVAAGMAGGSS) serves as a coordination point for ATP. D137 is a catalytic residue.

The protein belongs to the GHMP kinase family. IspE subfamily.

It catalyses the reaction 4-CDP-2-C-methyl-D-erythritol + ATP = 4-CDP-2-C-methyl-D-erythritol 2-phosphate + ADP + H(+). Its pathway is isoprenoid biosynthesis; isopentenyl diphosphate biosynthesis via DXP pathway; isopentenyl diphosphate from 1-deoxy-D-xylulose 5-phosphate: step 3/6. Catalyzes the phosphorylation of the position 2 hydroxy group of 4-diphosphocytidyl-2C-methyl-D-erythritol. The chain is 4-diphosphocytidyl-2-C-methyl-D-erythritol kinase from Clostridioides difficile (strain 630) (Peptoclostridium difficile).